The chain runs to 322 residues: Fructose-1,6-bisphosphatase class 1 3 (322 aa).

Mg(2+)-binding residues include glutamate 84, aspartate 103, leucine 105, and aspartate 106. Residues 106-109 (DGSS), asparagine 198, and lysine 262 contribute to the substrate site. Glutamate 268 is a Mg(2+) binding site.

Belongs to the FBPase class 1 family. As to quaternary structure, homotetramer. Mg(2+) is required as a cofactor.

The protein localises to the cytoplasm. It catalyses the reaction beta-D-fructose 1,6-bisphosphate + H2O = beta-D-fructose 6-phosphate + phosphate. It functions in the pathway carbohydrate biosynthesis; gluconeogenesis. This Pseudoalteromonas translucida (strain TAC 125) protein is Fructose-1,6-bisphosphatase class 1 3.